A 319-amino-acid chain; its full sequence is Non-homologous end joining protein Ku (319 aa).

Residues 10-188 form the Ku domain; that stretch reads ISFGLVTVPI…PQGIELSEDE (179 aa). The segment at 252 to 319 is disordered; sequence QSVAKAKASR…TTPKKPRRSA (68 aa). Residues 260-274 are compositionally biased toward basic and acidic residues; sequence SRGESGEADVHELPR. Over residues 305 to 319 the composition is skewed to basic residues; the sequence is TAAKKTTPKKPRRSA.

It belongs to the prokaryotic Ku family. Homodimer. Interacts with LigD.

Functionally, with LigD forms a non-homologous end joining (NHEJ) DNA repair enzyme, which repairs dsDNA breaks with reduced fidelity. Binds linear dsDNA with 5'- and 3'- overhangs but not closed circular dsDNA nor ssDNA. Recruits and stimulates the ligase activity of LigD. This is Non-homologous end joining protein Ku from Streptomyces avermitilis (strain ATCC 31267 / DSM 46492 / JCM 5070 / NBRC 14893 / NCIMB 12804 / NRRL 8165 / MA-4680).